Consider the following 124-residue polypeptide: MSSGKVKAGELWNKSKDDLTKQLAELKTELGQLRIQKVASSGSKLNRIHDIRKSIARVLTVINAKQRAQLRLFYKNKKYAPLDLRAKQTRAIRRRLSPDEKSRVLEKTKKRTVHFPQRKFAIKA.

It belongs to the universal ribosomal protein uL29 family.

The polypeptide is Large ribosomal subunit protein uL29 (RPL35) (Triticum aestivum (Wheat)).